The following is a 146-amino-acid chain: Snake venom vascular endothelial growth factor toxin (146 aa).

The N-terminal stretch at 1-24 (MAAYLLAVAILFCIQGWPLGTVQG) is a signal peptide. Gln25 carries the post-translational modification Pyrrolidone carboxylic acid. 3 cysteine pairs are disulfide-bonded: Cys38/Cys80, Cys69/Cys115, and Cys73/Cys117. The segment at 119–146 (PRSASGVNSRKHKRNPEEGEPRAKFPFV) is disordered. Positions 133–146 (NPEEGEPRAKFPFV) are enriched in basic and acidic residues.

The protein belongs to the PDGF/VEGF growth factor family. Snake venom VEGF subfamily. Homodimer; disulfide-linked. Interacts with VEGF receptor-1 (FLT1) with a high affinity, whereas it binds to VEGF receptor-2 (KDR) with a low affinity. Does not bind VEGF receptor-3 (FLT4). Expressed by the venom gland.

It is found in the secreted. In terms of biological role, snake venom VEGFs may contribute to venom dispersion and prey subjugation by inducing vascular permeability and hypotension. This protein induces vascular permeability probably through VEGF (VEGFR) signaling. This protein also induces a drastic hypotensive effect after intravenous injection. The hypotension is mediated by nitric oxide (NO), which is produced by VEGF-activated endothelium NO synthase. Also induces angiogenesis in vitro. Like other crotalid VEGFs, this protein interacts with VEGF receptor-1 (FLT1) with a high affinity, whereas it binds to VEGF receptor-2 (KDR) with a low affinity. This is Snake venom vascular endothelial growth factor toxin from Bothrops insularis (Golden lancehead).